The sequence spans 118 residues: Small integral membrane protein 17 (118 aa).

Positions 1 to 84 (MQSLRPEQTR…DDESEGSQGF (84 aa)) are disordered. Basic and acidic residues predominate over residues 13 to 42 (LEPERTKTLLPRESRAWEKPPHPACTKDWE). A helical transmembrane segment spans residues 96–116 (IVLVVCVLFLFLVLTGMPMMF).

Its subcellular location is the membrane. The chain is Small integral membrane protein 17 (SMIM17) from Homo sapiens (Human).